The primary structure comprises 1380 residues: MEPFAFGRGAPALCILTAAARINLDNFVPCCWALFRLSFFFPLDPAYIRNENKETRTSWISIEFFFFVKHCLSQHTFFSKTLAPKRNFRAKKLKDIGDTRIDRADKDFLLVPEPSMFVNGNQSNFAKPAGQGILPIPKKSRIIKTDKPRPFLCPTCTRGFVRQEHLKRHQHSHTREKPYLCIFCGRCFARRDLVLRHQQKLHAALVGTGDPRRMTPAPNSTSSFASKRRHSVAADDPTDLHIIKIAGNKETILPTPKNLAGKTSEELKEAVVALAKSNNVELPVSAPVMNDKREKTPPSKAGSLGFREFKFSTKGVPVHSASSDAVIDRANTPSSMHKTKRHASFSASSAMTYMSSSNSPHHSITNFELVEDAPHQVGFSTPQMTAKQLMESVSELDLPPLTLDEPPQAIKFNLNLFNNDPSGQQQQQQQQQQNSTSSTIVNSNNGSTVATPGVYLLSSGPSLTDLLTMNSAHAGAGGYMSSHHSPFDLGCFSHDKPTVSEFNLPSSFPNTIPSNSTTASNSYSNLANQTYRQMSNEQPLMSLSPKNPPTTVSDSSSTINFNPGTNNLLEPSMEPNDKDSNIDPAAIDDKWLSEFINNSDPKSTFKINFNHFNDIGFIYSPPSSRSSIPNKSPPNHSATSLNHEKASLSPRLNLSLNGSTDLPSTPQNQLKEPSYSDPISHSSHKRRRDSVMMDYDLSNFFSSRQLDISKVLNGTEQNNSHVNDDVLTLSFPGETDSNATQKQLPVLTPSDLLSPFSVPSVSQVLFTNELRSMMLADNNIDSGAFPTTSQLNDYVTYYKEEFHPFFSFIHLPSIIPNMDSYPLLLSISMVGALYGFHSTHAKVLANAASTQIRKSLKVSEKNPETTELWVIQTLVLLTFYCIFNKNTAVIKGMHGQLTTIIRLLKASRLNLPLESLCQPPIESDHIMEYENSPHMFSKIREQYNAPNQMNKNYQYFVLAQSRIRTCHAVLLISNLFSSLVGADCCFHSVDLKCGVPCYKEELYQCRNSDEWSDLLCQYKITLDSKFSLIELSNGNEAYENCLRFLSTGDSFFYGNARVSLSTCLSLLISIHEKILIERNNARISNNNTNSNNIELDDIEWKMTSRQRIDTMLKYWENLYLKNGGILTPTENSMSTINANPAMRLIIPVYLFAKMRRCLDLAHVIEKIWLKDWSNMNKALEEVCYDMGSLREATEYALNMVDAWTSFFTYIKQGKRRIFNTPVFATTCMFTAVLVISEYMKCVEDWARGYNANNPNSALLDFSDRVLWLKAERILRRLQMNLIPKECDVLKSYTDFLRWQDKDALDLSALNEEQAQRAMDPNTDINETIQLIVAASLSSKCLYLGVQILGDAPIWPIILSFAHGLQSRAIYSVTKKRNTRI.

2 C2H2-type zinc fingers span residues 151 to 173 (FLCP…QHSH) and 179 to 202 (YLCI…QKLH). Positions 208-231 (TGDPRRMTPAPNSTSSFASKRRHS) are disordered. A phosphoserine mark is found at serine 231 and serine 322. Disordered regions lie at residues 413 to 445 (NLNL…NSNN), 544 to 584 (SPKN…NIDP), 624 to 643 (SRSS…SLNH), and 652 to 688 (LNLS…KRRR). Over residues 424 to 445 (QQQQQQQQQQNSTSSTIVNSNN) the composition is skewed to low complexity. A Phosphoserine modification is found at serine 544. A compositionally biased stretch (polar residues) spans 544–569 (SPKNPPTTVSDSSSTINFNPGTNNLL). Positions 575-584 (PNDKDSNIDP) are enriched in basic and acidic residues. The segment covering 624-634 (SRSSIPNKSPP) has biased composition (low complexity). A Phosphoserine modification is found at serine 632. Over residues 652-681 (LNLSLNGSTDLPSTPQNQLKEPSYSDPISH) the composition is skewed to polar residues.

Belongs to the RSF2/TDA9 family.

It is found in the nucleus. Functionally, transcription factor that regulates expression of both nuclear and mitochondrial genes, and more specifically those required for glycerol-based growth and respiration. This is Respiration factor 2 (RSF2) from Saccharomyces cerevisiae (strain ATCC 204508 / S288c) (Baker's yeast).